An 864-amino-acid polypeptide reads, in one-letter code: A-kinase anchor protein 3 (864 aa).

Ser12 carries the phosphoserine; by STK33 modification. Residues 125–138 are PKA-RII subunit binding domain; the sequence is VSFYANRLTNLVIA. 2 disordered regions span residues 190 to 235 and 251 to 281; these read NISS…DKPG and AGDAKEGGRSLPGDQKLFRTSPDNRPDDFSN. The segment covering 204–218 has biased composition (polar residues); sequence SGSSQAPGLRYTSTL. A Phosphoserine modification is found at Ser206. A compositionally biased stretch (basic and acidic residues) spans 219–235; it reads KIKESTKEGKCPDDKPG. Ser405 carries the phosphoserine modification. Residue Tyr406 is modified to Phosphotyrosine. Positions 619-638 are disordered; the sequence is VHEQNTQEEEIHPCERPKTP. Over residues 627–638 the composition is skewed to basic and acidic residues; that stretch reads EEIHPCERPKTP.

Belongs to the AKAP110 family. As to quaternary structure, interacts with ROPN1 and ROPN1L. Interacts with QRICH2. Post-translationally, phosphorylated by STK33 during sperm flagella assembly. Phosphorylated on tyrosine.

The protein resides in the cytoplasmic vesicle. The protein localises to the secretory vesicle. It localises to the acrosome. Its subcellular location is the cell projection. It is found in the cilium. The protein resides in the flagellum. In terms of biological role, structural component of sperm fibrous sheath. Required for the formation of the subcellular structure of the sperm flagellum, sperm motility and male fertility. The polypeptide is A-kinase anchor protein 3 (Mus musculus (Mouse)).